The following is a 677-amino-acid chain: DNA ligase (677 aa).

NAD(+)-binding positions include 34–38, 84–85, and glutamate 118; these read DAQYD and SL. Lysine 120 serves as the catalytic N6-AMP-lysine intermediate. NAD(+)-binding residues include arginine 141, glutamate 176, lysine 283, and lysine 307. Zn(2+) contacts are provided by cysteine 403, cysteine 406, cysteine 421, and cysteine 427. The region spanning 594–677 is the BRCT domain; sequence ETASPISGKT…DLLKTVSNSE (84 aa).

It belongs to the NAD-dependent DNA ligase family. LigA subfamily. The cofactor is Mg(2+). It depends on Mn(2+) as a cofactor.

The catalysed reaction is NAD(+) + (deoxyribonucleotide)n-3'-hydroxyl + 5'-phospho-(deoxyribonucleotide)m = (deoxyribonucleotide)n+m + AMP + beta-nicotinamide D-nucleotide.. In terms of biological role, DNA ligase that catalyzes the formation of phosphodiester linkages between 5'-phosphoryl and 3'-hydroxyl groups in double-stranded DNA using NAD as a coenzyme and as the energy source for the reaction. It is essential for DNA replication and repair of damaged DNA. This Anaplasma phagocytophilum (strain HZ) protein is DNA ligase.